The chain runs to 348 residues: MFEDQTYESIMDRMLNSISADIDKREGSVIYNALAPVAAELAKSYIWLDTVLELVFSDTAQGEFLDRRATEAGIERTAATKAVRAGEFTEGVTIPVGSRFYVDNLYFQYTADGTLECETAGEAGNANISGQNLLSLDTIPGLQKAIVKEILIPGREEEDDDSLRARYFTRVRREAVSANKAHYKQWAEEVDGVGKVKVFPLWNGDGTVKIVVTNANLEPASDILISKVKNYIDPEPGQGEGQAPIGAFVTVESAVWKEVEISAEVLPEVNSSIDQVKQEIESGVLNLFKKIAFEDNVIRLSQINNIVYNSPSVSDYADIKINGVAENLVLSAVEIPKLGQVNIIEQTR.

This sequence belongs to the Mu gp47/PBSX XkdT family.

This is an uncharacterized protein from Bacillus subtilis (strain 168).